Consider the following 398-residue polypeptide: NADH-quinone oxidoreductase subunit D (398 aa).

This sequence belongs to the complex I 49 kDa subunit family. As to quaternary structure, NDH-1 is composed of 14 different subunits. Subunits NuoB, C, D, E, F, and G constitute the peripheral sector of the complex.

It is found in the cell inner membrane. The enzyme catalyses a quinone + NADH + 5 H(+)(in) = a quinol + NAD(+) + 4 H(+)(out). Functionally, NDH-1 shuttles electrons from NADH, via FMN and iron-sulfur (Fe-S) centers, to quinones in the respiratory chain. The immediate electron acceptor for the enzyme in this species is believed to be ubiquinone. Couples the redox reaction to proton translocation (for every two electrons transferred, four hydrogen ions are translocated across the cytoplasmic membrane), and thus conserves the redox energy in a proton gradient. This chain is NADH-quinone oxidoreductase subunit D, found in Caulobacter vibrioides (strain ATCC 19089 / CIP 103742 / CB 15) (Caulobacter crescentus).